The chain runs to 163 residues: SsrA-binding protein (163 aa).

The segment covering 140–157 (RRGAIAERESKREMDRAL) has biased composition (basic and acidic residues). Residues 140–163 (RRGAIAERESKREMDRALARGRRR) form a disordered region.

It belongs to the SmpB family.

Its subcellular location is the cytoplasm. Required for rescue of stalled ribosomes mediated by trans-translation. Binds to transfer-messenger RNA (tmRNA), required for stable association of tmRNA with ribosomes. tmRNA and SmpB together mimic tRNA shape, replacing the anticodon stem-loop with SmpB. tmRNA is encoded by the ssrA gene; the 2 termini fold to resemble tRNA(Ala) and it encodes a 'tag peptide', a short internal open reading frame. During trans-translation Ala-aminoacylated tmRNA acts like a tRNA, entering the A-site of stalled ribosomes, displacing the stalled mRNA. The ribosome then switches to translate the ORF on the tmRNA; the nascent peptide is terminated with the 'tag peptide' encoded by the tmRNA and targeted for degradation. The ribosome is freed to recommence translation, which seems to be the essential function of trans-translation. This chain is SsrA-binding protein, found in Anaeromyxobacter dehalogenans (strain 2CP-C).